A 265-amino-acid chain; its full sequence is (-)-isopiperitenol/(-)-carveol dehydrogenase, mitochondrial (265 aa).

Residues 1–30 (MASVKKLAGKVAIVTGGASGIGEVTARLFA) constitute a mitochondrion transit peptide. Position 13-38 (13-38 (IVTGGASGIGEVTARLFAERGARAVV)) interacts with NAD(+). Ser-147 contacts substrate. Tyr-160 (proton acceptor) is an active-site residue.

It belongs to the short-chain dehydrogenases/reductases (SDR) family. As to quaternary structure, homodimer and homotetramer. Peltate glandular trichomes.

Its subcellular location is the mitochondrion. The enzyme catalyses (1S,6R)-isopiperitenol + NAD(+) = (6R)-isopiperitenone + NADH + H(+). It carries out the reaction (1S,5R)-carveol + NADP(+) = (R)-carvone + NADPH + H(+). Functionally, involved in the biosynthesis of menthol and related monoterpenes in leaves. Can use (-)-trans-carveol and, with a lower relative velocity, (-)-trans-isopiperitenol, (+)-neomenthol, (+)-neoisomenthol and (-)-cis-isopiperitenol as substrates, but not (-)-cis-carvenol, (-)-menthol, (+)-isomenthol, 7-hydroxy-limonene, (-)-isopiperitenone or (-)-carvone. This Mentha piperita (Peppermint) protein is (-)-isopiperitenol/(-)-carveol dehydrogenase, mitochondrial.